The following is a 171-amino-acid chain: Co-chaperone protein HscB (171 aa).

The J domain occupies 2–74; sequence DYFTLFGLPA…LMRAEYLLSL (73 aa).

Belongs to the HscB family. In terms of assembly, interacts with HscA and stimulates its ATPase activity. Interacts with IscU.

In terms of biological role, co-chaperone involved in the maturation of iron-sulfur cluster-containing proteins. Seems to help targeting proteins to be folded toward HscA. This Shigella boydii serotype 18 (strain CDC 3083-94 / BS512) protein is Co-chaperone protein HscB.